The following is a 538-amino-acid chain: CTP synthase (538 aa).

The segment at 1–265 (MARYIFVTGG…DLQVLNYFKL (265 aa)) is amidoligase domain. S13 provides a ligand contact to CTP. A UTP-binding site is contributed by S13. Residues 14-19 (SLGKGL) and D71 each bind ATP. The Mg(2+) site is built by D71 and E139. Residues 146 to 148 (DIE), 186 to 191 (KTKPTQ), and K222 each bind CTP. UTP-binding positions include 186 to 191 (KTKPTQ) and K222. The Glutamine amidotransferase type-1 domain occupies 291–538 (NIAIIGKYVE…SFIKAAKNHK (248 aa)). An L-glutamine-binding site is contributed by G353. The active-site Nucleophile; for glutamine hydrolysis is the C380. Residues 381–384 (YGMQ), E404, and R468 each bind L-glutamine. Active-site residues include H513 and E515.

It belongs to the CTP synthase family. As to quaternary structure, homotetramer.

It catalyses the reaction UTP + L-glutamine + ATP + H2O = CTP + L-glutamate + ADP + phosphate + 2 H(+). The catalysed reaction is L-glutamine + H2O = L-glutamate + NH4(+). It carries out the reaction UTP + NH4(+) + ATP = CTP + ADP + phosphate + 2 H(+). Its pathway is pyrimidine metabolism; CTP biosynthesis via de novo pathway; CTP from UDP: step 2/2. Its activity is regulated as follows. Allosterically activated by GTP, when glutamine is the substrate; GTP has no effect on the reaction when ammonia is the substrate. The allosteric effector GTP functions by stabilizing the protein conformation that binds the tetrahedral intermediate(s) formed during glutamine hydrolysis. Inhibited by the product CTP, via allosteric rather than competitive inhibition. Its function is as follows. Catalyzes the ATP-dependent amination of UTP to CTP with either L-glutamine or ammonia as the source of nitrogen. Regulates intracellular CTP levels through interactions with the four ribonucleotide triphosphates. This Pelagibacter ubique (strain HTCC1062) protein is CTP synthase.